Here is a 250-residue protein sequence, read N- to C-terminus: Copper homeostasis protein cutC homolog (250 aa).

It belongs to the CutC family.

Its function is as follows. Involved in copper homeostasis. Affects body morphology and length, egg laying and brood size. This is Copper homeostasis protein cutC homolog (cutc-1) from Caenorhabditis elegans.